The following is a 102-amino-acid chain: Large ribosomal subunit protein bL21 (102 aa).

The protein belongs to the bacterial ribosomal protein bL21 family. As to quaternary structure, part of the 50S ribosomal subunit. Contacts protein L20.

In terms of biological role, this protein binds to 23S rRNA in the presence of protein L20. This is Large ribosomal subunit protein bL21 from Campylobacter lari (strain RM2100 / D67 / ATCC BAA-1060).